We begin with the raw amino-acid sequence, 305 residues long: Oxygen-dependent coproporphyrinogen-III oxidase (305 aa).

S97 contacts substrate. A divalent metal cation is bound by residues H101 and H111. The active-site Proton donor is H111. 113–115 lines the substrate pocket; it reads NVR. A divalent metal cation is bound by residues H150 and H180. Residues 245 to 280 form an important for dimerization region; the sequence is YVEFNLVWDRGTHFGLQSGGRTESILLSMPPLASWA. 263–265 is a substrate binding site; sequence GGR.

The protein belongs to the aerobic coproporphyrinogen-III oxidase family. As to quaternary structure, homodimer. A divalent metal cation is required as a cofactor.

The protein localises to the cytoplasm. The catalysed reaction is coproporphyrinogen III + O2 + 2 H(+) = protoporphyrinogen IX + 2 CO2 + 2 H2O. Its pathway is porphyrin-containing compound metabolism; protoporphyrin-IX biosynthesis; protoporphyrinogen-IX from coproporphyrinogen-III (O2 route): step 1/1. Functionally, involved in the heme biosynthesis. Catalyzes the aerobic oxidative decarboxylation of propionate groups of rings A and B of coproporphyrinogen-III to yield the vinyl groups in protoporphyrinogen-IX. This chain is Oxygen-dependent coproporphyrinogen-III oxidase, found in Variovorax paradoxus (strain S110).